We begin with the raw amino-acid sequence, 492 residues long: MANYFNTLNLRQQLAQLGKCRFMARDEFADEAGYLKGKKVVIVGCGAQGLNQGLNMRDSGLDVAYALRKEAIAEKRASWRKATENGFKVGTYEELIPQADLVVNLTPDKQHSAVVKAVQPLMKEGAALGYSHGFNIVEVGEQVRKDITVVMVAPKCPGTEVREEYKRGFGVPTLIAVHPENDPKGEGMAIAKAWAAATGGHRAGVLESSFVAEVKSDLMGEQTILCGMLQAGSLLCFDKLVSEGTDAAYAEKLIQFGWETITEALKQGGITLMMDRLSNPAKLRAYALSEQLKEIMAPLFQKHMDDIISGAFSSGMMADWANDDVKLLNWREETGRTAFENAPQFEGKISEQEYFDHGVLMIAMVKAGVELAFETMVDSGIIEESAYYESLHELPLIANTIARKRLYEMNVVISDTAEYGNYLFANAAVPLLKEKFMDSLQAGDLGKSIPGSAVDNAQLRDVNEAIRNHPIEAVGHKLRGYMTDMKRIAVAG.

The KARI N-terminal Rossmann domain occupies Ala15–Ser208. NADP(+) is bound by residues Cys45–Gln48, Arg68, Arg76, Ser78, and Asp108–Gln110. His132 is an active-site residue. Gly158 contacts NADP(+). KARI C-terminal knotted domains follow at residues Ser209–Gln344 and Phe345–Met485. Residues Asp217, Glu221, Glu389, and Glu393 each contribute to the Mg(2+) site. Residue Ser414 participates in substrate binding.

It belongs to the ketol-acid reductoisomerase family. The cofactor is Mg(2+).

It catalyses the reaction (2R)-2,3-dihydroxy-3-methylbutanoate + NADP(+) = (2S)-2-acetolactate + NADPH + H(+). The catalysed reaction is (2R,3R)-2,3-dihydroxy-3-methylpentanoate + NADP(+) = (S)-2-ethyl-2-hydroxy-3-oxobutanoate + NADPH + H(+). It participates in amino-acid biosynthesis; L-isoleucine biosynthesis; L-isoleucine from 2-oxobutanoate: step 2/4. Its pathway is amino-acid biosynthesis; L-valine biosynthesis; L-valine from pyruvate: step 2/4. Involved in the biosynthesis of branched-chain amino acids (BCAA). Catalyzes an alkyl-migration followed by a ketol-acid reduction of (S)-2-acetolactate (S2AL) to yield (R)-2,3-dihydroxy-isovalerate. In the isomerase reaction, S2AL is rearranged via a Mg-dependent methyl migration to produce 3-hydroxy-3-methyl-2-ketobutyrate (HMKB). In the reductase reaction, this 2-ketoacid undergoes a metal-dependent reduction by NADPH to yield (R)-2,3-dihydroxy-isovalerate. This is Ketol-acid reductoisomerase (NADP(+)) from Yersinia pseudotuberculosis serotype O:3 (strain YPIII).